The chain runs to 194 residues: Large ribosomal subunit protein uL5 (194 aa).

The protein belongs to the universal ribosomal protein uL5 family. As to quaternary structure, part of the 50S ribosomal subunit; part of the 5S rRNA/L5/L18/L25 subcomplex. Contacts the 5S rRNA and the P site tRNA. Forms a bridge to the 30S subunit in the 70S ribosome.

Its function is as follows. This is one of the proteins that bind and probably mediate the attachment of the 5S RNA into the large ribosomal subunit, where it forms part of the central protuberance. In the 70S ribosome it contacts protein S13 of the 30S subunit (bridge B1b), connecting the 2 subunits; this bridge is implicated in subunit movement. Contacts the P site tRNA; the 5S rRNA and some of its associated proteins might help stabilize positioning of ribosome-bound tRNAs. The chain is Large ribosomal subunit protein uL5 from Frankia alni (strain DSM 45986 / CECT 9034 / ACN14a).